The following is a 494-amino-acid chain: Cytochrome P450 2G1 (494 aa).

Cys-439 is a binding site for heme.

It belongs to the cytochrome P450 family. Heme serves as cofactor. In terms of tissue distribution, olfactory epithelium.

It localises to the endoplasmic reticulum membrane. The protein resides in the microsome membrane. The catalysed reaction is an organic molecule + reduced [NADPH--hemoprotein reductase] + O2 = an alcohol + oxidized [NADPH--hemoprotein reductase] + H2O + H(+). Cytochromes P450 are a group of heme-thiolate monooxygenases. This isozyme seems to be implicated in olfaction. This is Cytochrome P450 2G1 (Cyp2g1) from Rattus norvegicus (Rat).